The sequence spans 268 residues: Riboflavin transport system permease protein RibX (268 aa).

Helical transmembrane passes span 24–44 (ALGL…GVTL), 76–96 (LATL…ALIL), 119–139 (AIPV…GLTS), 140–160 (KVLV…VVAI), 185–205 (VEAP…LALA), and 236–256 (LIFV…VLAG). One can recognise an ABC transmembrane type-1 domain in the interval 75 to 255 (TLATLSAALG…LITLTLYVLA (181 aa)).

This sequence belongs to the binding-protein-dependent transport system permease family. In terms of assembly, the complex is likely composed of an ATP-binding protein, a transmembrane protein (RibX) and a solute-binding protein (RibY).

It localises to the cell membrane. In terms of biological role, part of an ABC transporter complex that transports riboflavin into the cell. In Chloroflexus aurantiacus (strain ATCC 29366 / DSM 635 / J-10-fl), this protein is Riboflavin transport system permease protein RibX.